A 56-amino-acid polypeptide reads, in one-letter code: Small ribosomal subunit protein uS14 (56 aa).

This sequence belongs to the universal ribosomal protein uS14 family.

The chain is Small ribosomal subunit protein uS14 (RPS29) from Kluyveromyces lactis (strain ATCC 8585 / CBS 2359 / DSM 70799 / NBRC 1267 / NRRL Y-1140 / WM37) (Yeast).